Consider the following 902-residue polypeptide: MRIISRQIVLLFSGFWGLAMGAFPSSVQIGGLFIRNTDQEYTAFRLAIFLHNTSPNASEAPFNLVPHVDNIETANSFAVTNAFCSQYSRGVFAIFGLYDKRSVHTLTSFCSALHISLITPSFPTEGESQFVLQLRPSLRGALLSLLDHYEWNCFVFLYDTDRGYSILQAIMEKAGQNGWHVSAICVENFNDVSYRQLLEELDRRQEKKFVIDCEIERLQNILEQIVSVGKHVKGYHYIIANLGFKDISLERFIHGGANVTGFQLVDFNTPMVIKLMDRWKKLDQREYPGSETPPKYTSALTYDGVLVMAETFRSLRRQKIDISRRGNAGDCLANPAAPWGQGIDMERTLKQVRIQGLTGNVQFDHYGRRVNYTMDVFELKSTGPRKVGYWNDMDKLVLIQDVPTLGNDTAAIENRTVVVTTIMESPYVMYKKNHEMFEGNDKYEGYCVDLASEIAKHIGIKYKIAIVPDGKYGARDADTKIWNGMVGELVYGKAEIAIAPLTITLVREEVIDFSKPFMSLGISIMIKKPQKSKPGVFSFLDPLAYEIWMCIVFAYIGVSVVLFLVSRFSPYEWHTEEPEDGKEGPSDQPPNEFGIFNSLWFSLGAFMQQGCDISPRSLSGRIVGGVWWFFTLIIISSYTANLAAFLTVERMVSPIESAEDLAKQTEIAYGTLDSGSTKEFFRRSKIAVYEKMWTYMRSAEPSVFTRTTAEGVARVRKSKGKFAFLLESTMNEYIEQRKPCDTMKVGGNLDSKGYGVATPKGSSLGNAVNLAVLKLNEPGLLDKLKNKWWYDKGECGSGGGDSKDKTSALSLSNVAGVFYILVGGLGLAMLVALIEFCYKSRAEAKRMKLTFSEAIRNKARLSITGSVGENGRVLTPDCPKAVHAGTAIRQSSGLAVIASDLP.

The signal sequence occupies residues 1–20 (MRIISRQIVLLFSGFWGLAM). Residues 22–544 (AFPSSVQIGG…GVFSFLDPLA (523 aa)) lie on the Extracellular side of the membrane. 6 N-linked (GlcNAc...) asparagine glycosylation sites follow: N52, N56, N258, N371, N407, and N414. C84 and C331 are disulfide-bonded. L-glutamate-binding residues include P500, T502, and R507. A helical membrane pass occupies residues 545–565 (YEIWMCIVFAYIGVSVVLFLV). The Cytoplasmic portion of the chain corresponds to 566–592 (SRFSPYEWHTEEPEDGKEGPSDQPPNE). Residues 593–608 (FGIFNSLWFSLGAFMQ) constitute an intramembrane region (helical; Pore-forming). Residues 609-611 (QGC) lie within the membrane without spanning it. C611 carries S-palmitoyl cysteine lipidation. The Cytoplasmic portion of the chain corresponds to 612–617 (DISPRS). The helical transmembrane segment at 618 to 638 (LSGRIVGGVWWFFTLIIISSY) threads the bilayer. The Extracellular segment spans residues 639 to 813 (TANLAAFLTV…DKTSALSLSN (175 aa)). L-glutamate is bound by residues S676, T677, and E727. C740 and C795 are joined by a disulfide. The chain crosses the membrane as a helical span at residues 814–834 (VAGVFYILVGGLGLAMLVALI). Residues 835–902 (EFCYKSRAEA…GLAVIASDLP (68 aa)) lie on the Cytoplasmic side of the membrane. Residue C837 is the site of S-palmitoyl cysteine attachment. S862 bears the Phosphoserine; by PKC/PRKCG mark.

This sequence belongs to the glutamate-gated ion channel (TC 1.A.10.1) family. GRIA4 subfamily. Homotetramer or heterotetramer of pore-forming glutamate receptor subunits. Tetramers may be formed by the dimerization of dimers. Interacts with EPB41L1 via its C-terminus. Isoform 3 interacts with PICK1. Found in a complex with GRIA1, GRIA2, GRIA3, CNIH2, CNIH3, CACNG2, CACNG3, CACNG4, CACNG5, CACNG7 and CACNG8. Interacts with CACNG5 and PRKCG. Found in a complex with GRIA1, GRIA2, GRIA3, DLG4, CACNG8 and CNIH2. In terms of processing, palmitoylated. Depalmitoylated upon L-glutamate stimulation. ZDHHC3/GODZ specifically palmitoylates Cys-611, which leads to Golgi retention and decreased cell surface expression. In contrast, Cys-837 palmitoylation does not affect cell surface expression but regulates stimulation-dependent endocytosis. Post-translationally, phosphorylated at Ser-862 by PRKCG; phosphorylation increases plasma membrane-associated GRI4 expression.

Its subcellular location is the cell membrane. The protein localises to the postsynaptic cell membrane. It localises to the cell projection. It is found in the dendrite. The enzyme catalyses Ca(2+)(in) = Ca(2+)(out). It catalyses the reaction Na(+)(in) = Na(+)(out). The catalysed reaction is Mg(2+)(in) = Mg(2+)(out). Its function is as follows. Ionotropic glutamate receptor that functions as a ligand-gated cation channel, gated by L-glutamate and glutamatergic agonists such as alpha-amino-3-hydroxy-5-methyl-4-isoxazolepropionic acid (AMPA), quisqualic acid, and kainic acid. L-glutamate acts as an excitatory neurotransmitter at many synapses in the central nervous system and plays an important role in fast excitatory synaptic transmission. Binding of the excitatory neurotransmitter L-glutamate induces a conformation change, leading to the opening of the cation channel, and thereby converts the chemical signal to an electrical impulse upon entry of monovalent and divalent cations such as sodium and calcium. The receptor then desensitizes rapidly and enters a transient inactive state, characterized by the presence of bound agonist. In the presence of CACNG8, shows resensitization which is characterized by a delayed accumulation of current flux upon continued application of L-glutamate. The sequence is that of Glutamate receptor 4 from Macaca fascicularis (Crab-eating macaque).